The sequence spans 779 residues: LPS-assembly protein LptD (779 aa).

Residues 1-23 form the signal peptide; sequence MKIRYSVLSTFIISALYSQDTQA.

It belongs to the LptD family. As to quaternary structure, component of the lipopolysaccharide transport and assembly complex. Interacts with LptE and LptA.

It localises to the cell outer membrane. Functionally, together with LptE, is involved in the assembly of lipopolysaccharide (LPS) at the surface of the outer membrane. The protein is LPS-assembly protein LptD of Haemophilus ducreyi (strain 35000HP / ATCC 700724).